Consider the following 619-residue polypeptide: Interferon-activable protein 204 (619 aa).

Residues 1–88 (MVNEYKRIVL…AEILKKERSE (88 aa)) form the Pyrin domain. Positions 24-35 (LFKSLLARDLNL) match the Nuclear export signal motif. Residues 86-99 (RSEVTGETSLEKNG) show a composition bias toward basic and acidic residues. The tract at residues 86–223 (RSEVTGETSL…QNQNIPRGAV (138 aa)) is disordered. Over residues 122 to 153 (TSATQEETSTAQAGTSTAQARTSTAQAGTSTA) the composition is skewed to low complexity. A run of 3 repeats spans residues 134–140 (AGTSTAQ), 141–147 (ARTSTAQ), and 148–154 (AGTSTAQ). The 3 X 7 AA tandem repeats of A-[GR]-T-S-T-A-Q stretch occupies residues 134-154 (AGTSTAQARTSTAQAGTSTAQ). The Nuclear localization signal signature appears at 150–157 (TSTAQKRK). Positions 159–176 (MREEETGVKKSKAAKEPD) are enriched in basic and acidic residues. The span at 190-206 (SPILHSSSSASSNIPSA) shows a compositional bias: low complexity. Polar residues predominate over residues 207–218 (KNQKSQPQNQNI). HIN-200 domains follow at residues 213 to 413 (PQNQ…IKIS) and 417 to 615 (NVPK…MQVI). The interaction with ID2 stretch occupies residues 550-614 (KKTERNKFIY…RSVRHSYMQV (65 aa)).

This sequence belongs to the HIN-200 family. In terms of assembly, interacts with UBTF. Interacts with RUNX2. Interacts with ID1, ID2 and ID3. Interacts with STING. In terms of processing, acetylated upon bacterial infection, leading to translocation from nucleus to cytoplasm and subsequent recruitment of STING to activate IFN-beta production. Present in osteoblasts (at protein level).

The protein resides in the nucleus. It is found in the nucleolus. The protein localises to the cytoplasm. In terms of biological role, interferon-stimulated protein that plays a role in several biological processes including cell differentiation, autophagy and innate immunity. Cooperates with CGAS to sense dsDNA and activates the STING-dependent type I IFN pathway. Mechanistically, gets acetylated upon bacterial infection and then translocates from nucleus into cytoplasm to recruit STING for activation of TBK1-dependent IRF3 nuclear translocation and IFN-beta release. Inhibits the transcription of ribosomal RNA. May inhibit DNA binding by UBTF. Inhibits cell growth via p53/TP53 and RB1-dependent and independent pathways. Acts as a coactivator of RUNX2 during osteogenesis. May be involved in macrophage differentiation. Enables skeletal muscle and cardiac myocyte differentiation by sequestring Id proteins in the cytosol and promoting their ubiquitination and subsequent degradation. The chain is Interferon-activable protein 204 (Ifi204) from Mus musculus (Mouse).